The following is an 804-amino-acid chain: E3 UFM1-protein ligase 1 homolog (804 aa).

Residue Met1 is modified to N-acetylmethionine. The disordered stretch occupies residues 397–483; it reads IHPSSKSSES…VKAQESNNII (87 aa). The span at 400-409 shows a compositional bias: low complexity; the sequence is SSKSSESTES. Residues 463–475 show a composition bias toward basic and acidic residues; that stretch reads LDSKAGGKKESVK.

Belongs to the UFL1 family.

E3 UFM1-protein ligase that mediates ufmylation of target proteins. In Arabidopsis thaliana (Mouse-ear cress), this protein is E3 UFM1-protein ligase 1 homolog.